We begin with the raw amino-acid sequence, 342 residues long: Phosphate acyltransferase (342 aa).

It belongs to the PlsX family. Homodimer. Probably interacts with PlsY.

It localises to the cytoplasm. The enzyme catalyses a fatty acyl-[ACP] + phosphate = an acyl phosphate + holo-[ACP]. It participates in lipid metabolism; phospholipid metabolism. Catalyzes the reversible formation of acyl-phosphate (acyl-PO(4)) from acyl-[acyl-carrier-protein] (acyl-ACP). This enzyme utilizes acyl-ACP as fatty acyl donor, but not acyl-CoA. The polypeptide is Phosphate acyltransferase (Alkalilimnicola ehrlichii (strain ATCC BAA-1101 / DSM 17681 / MLHE-1)).